Consider the following 788-residue polypeptide: Endonuclease MutS2 (788 aa).

332-339 (GPNTGGKT) is an ATP binding site. The Smr domain maps to 713 to 788 (VDLRGMDAEE…GTGVTVVELK (76 aa)).

This sequence belongs to the DNA mismatch repair MutS family. MutS2 subfamily. In terms of assembly, homodimer. Binds to stalled ribosomes, contacting rRNA.

In terms of biological role, endonuclease that is involved in the suppression of homologous recombination and thus may have a key role in the control of bacterial genetic diversity. Functionally, acts as a ribosome collision sensor, splitting the ribosome into its 2 subunits. Detects stalled/collided 70S ribosomes which it binds and splits by an ATP-hydrolysis driven conformational change. Acts upstream of the ribosome quality control system (RQC), a ribosome-associated complex that mediates the extraction of incompletely synthesized nascent chains from stalled ribosomes and their subsequent degradation. Probably generates substrates for RQC. The protein is Endonuclease MutS2 of Clostridium botulinum (strain Okra / Type B1).